A 161-amino-acid polypeptide reads, in one-letter code: Transcription elongation factor GreA (161 aa).

The stretch at 45–72 (NAEYHSAKEKLKLIDIQIAELNAVISKA) forms a coiled coil.

It belongs to the GreA/GreB family.

Necessary for efficient RNA polymerase transcription elongation past template-encoded arresting sites. The arresting sites in DNA have the property of trapping a certain fraction of elongating RNA polymerases that pass through, resulting in locked ternary complexes. Cleavage of the nascent transcript by cleavage factors such as GreA or GreB allows the resumption of elongation from the new 3'terminus. GreA releases sequences of 2 to 3 nucleotides. The protein is Transcription elongation factor GreA of Aliarcobacter butzleri (strain RM4018) (Arcobacter butzleri).